The primary structure comprises 396 residues: 2-methyl-aconitate isomerase (396 aa).

Residues Ser-19 and 66 to 70 (SSTSK) each bind substrate. The Proton donor/acceptor role is filled by Cys-104. A Cysteine sulfinic acid (-SO2H) modification is found at Cys-104. Residues Asn-106, Lys-278, Ser-309, and His-314 each coordinate substrate. Met-318 serves as the catalytic Proton donor/acceptor. Gly-319 serves as a coordination point for substrate.

The protein belongs to the PrpF family. As to quaternary structure, homodimer.

The catalysed reaction is 2-methyl-trans-aconitate = 2-methyl-cis-aconitate. It functions in the pathway organic acid metabolism; propanoate degradation. Its function is as follows. Catalyzes the isomerization of 2-methyl-trans-aconitate to yield 2-methyl-cis-aconitate through a base-catalyzed proton abstraction coupled with a rotation about C2-C3 bond of 2-methyl-aconitate. In Cupriavidus necator (Alcaligenes eutrophus), this protein is 2-methyl-aconitate isomerase.